The sequence spans 281 residues: BEN domain-containing protein 6 (281 aa).

Disordered stretches follow at residues 15 to 62 and 143 to 172; these read VLRK…ETPL and SFASLCSNSNSTSSSPSSVKAEEEQHPGEK. The stretch at 19–99 forms a coiled coil; the sequence is RKRKRTETAN…RLRQSLVMLQ (81 aa). The span at 143-160 shows a compositional bias: low complexity; sequence SFASLCSNSNSTSSSPSS. The span at 162-172 shows a compositional bias: basic and acidic residues; the sequence is KAEEEQHPGEK. The BEN domain maps to 171–271; it reads EKQFTIERWQ…NCTKKPNASK (101 aa).

As to quaternary structure, interacts (via BEN domain) with RBPJ.

It localises to the nucleus. Functionally, acts as a corepressor of recombining binding protein suppressor hairless (RBPJ) and inhibits Notch signaling in neural stem cells, thereby opposing their self-renewal and promoting neurogenesis. In Mus musculus (Mouse), this protein is BEN domain-containing protein 6 (Bend6).